A 1024-amino-acid polypeptide reads, in one-letter code: Integrator complex subunit 7 homolog (1024 aa).

Polar residues-rich tracts occupy residues 1 to 11 (MSKYKNSSLLN) and 19 to 36 (PSLS…QLPP). Disordered regions lie at residues 1-109 (MSKY…PTNS), 472-502 (DNNN…NNNN), and 842-863 (NNNN…NNNN). Low complexity-rich tracts occupy residues 44–77 (STNN…NNTV), 85–96 (TAGSSTSSASSV), and 473–502 (NNNN…NNNN).

This sequence belongs to the Integrator subunit 7 family. Component of the Integrator complex. The core complex associates with protein phosphatase 2A subunits, to form the Integrator-PP2A (INTAC) complex.

The protein localises to the nucleus. Its subcellular location is the chromosome. The protein resides in the cytoplasm. Its function is as follows. Component of the integrator complex, a multiprotein complex that terminates RNA polymerase II (Pol II) transcription in the promoter-proximal region of genes. The integrator complex provides a quality checkpoint during transcription elongation by driving premature transcription termination of transcripts that are unfavorably configured for transcriptional elongation: the complex terminates transcription by (1) catalyzing dephosphorylation of the C-terminal domain (CTD) of Pol II subunit polr2a, (2) degrading the exiting nascent RNA transcript via endonuclease activity and (3) promoting the release of Pol II from bound DNA. The integrator complex is also involved in terminating the synthesis of non-coding Pol II transcripts, such as enhancer RNAs (eRNAs), small nuclear RNAs (snRNAs), telomerase RNAs and long non-coding RNAs (lncRNAs). The chain is Integrator complex subunit 7 homolog (ints7) from Dictyostelium discoideum (Social amoeba).